The sequence spans 677 residues: uncharacterized protein (677 aa).

3 helical membrane passes run 80-102 (ILSL…RASF), 338-360 (ALLS…LFGF), and 367-386 (LVAM…LLSL). A disordered region spans residues 523-556 (DEAASLPSDSSPEEDLDPLEEVESIEGTAEESTR). The span at 533–546 (SPEEDLDPLEEVES) shows a compositional bias: acidic residues.

The protein resides in the cell membrane. This is an uncharacterized protein from Treponema pallidum (strain Nichols).